The following is a 140-amino-acid chain: Large ribosomal subunit protein uL22c (140 aa).

It belongs to the universal ribosomal protein uL22 family. In terms of assembly, part of the 50S ribosomal subunit.

Its subcellular location is the plastid. The protein resides in the chloroplast. Functionally, this protein binds specifically to 23S rRNA. In terms of biological role, the globular domain of the protein is located near the polypeptide exit tunnel on the outside of the subunit, while an extended beta-hairpin is found that lines the wall of the exit tunnel in the center of the 70S ribosome. The sequence is that of Large ribosomal subunit protein uL22c (rpl22) from Calycanthus floridus var. glaucus (Eastern sweetshrub).